The primary structure comprises 361 residues: D-alanine--D-alanine ligase (361 aa).

One can recognise an ATP-grasp domain in the interval 134–344; it reads KLLLKSFNIP…FKDLIDNLID (211 aa). 167-222 is a binding site for ATP; sequence KEVLGYPVIVKPAVLGSSIGINVAYSENQIESCIEEALKYDLTIVIEKFIEAREIE. Mg(2+) is bound by residues D297, E311, and N313.

The protein belongs to the D-alanine--D-alanine ligase family. It depends on Mg(2+) as a cofactor. The cofactor is Mn(2+).

The protein resides in the cytoplasm. It catalyses the reaction 2 D-alanine + ATP = D-alanyl-D-alanine + ADP + phosphate + H(+). It functions in the pathway cell wall biogenesis; peptidoglycan biosynthesis. Cell wall formation. This Borreliella afzelii (strain PKo) (Borrelia afzelii) protein is D-alanine--D-alanine ligase.